The sequence spans 222 residues: MAASPDLTGFALDRARMIDTQLRQRGIRDERVLNAMATIPREEFVVARYHPDAYADHPLPIPLGQTISQPYIVARMLEAAQIAPADKVLEVGTGTGYQAALLGALAAQVFTIERHAELAALARIHLEHLGYTNISVITGDGSEGLADQAPFDVILVAAAVPDFPPALFHQLAEGGRMVIPVGSPELQALYVVRKQAGRLQRTKLDDCRFVPLIGNQGYSPAR.

Ser68 is a catalytic residue.

This sequence belongs to the methyltransferase superfamily. L-isoaspartyl/D-aspartyl protein methyltransferase family.

Its subcellular location is the cytoplasm. The catalysed reaction is [protein]-L-isoaspartate + S-adenosyl-L-methionine = [protein]-L-isoaspartate alpha-methyl ester + S-adenosyl-L-homocysteine. Catalyzes the methyl esterification of L-isoaspartyl residues in peptides and proteins that result from spontaneous decomposition of normal L-aspartyl and L-asparaginyl residues. It plays a role in the repair and/or degradation of damaged proteins. This chain is Protein-L-isoaspartate O-methyltransferase, found in Koribacter versatilis (strain Ellin345).